The sequence spans 87 residues: UPF0213 protein SSA_0709 (87 aa).

Positions 3–78 constitute a GIY-YIG domain; the sequence is NKAYMYVLEC…KKKTRQAKLA (76 aa).

Belongs to the UPF0213 family.

The protein is UPF0213 protein SSA_0709 of Streptococcus sanguinis (strain SK36).